Here is a 146-residue protein sequence, read N- to C-terminus: Hemoglobin subunit beta (146 aa).

At Val-1 the chain carries N-acetylvaline. The 145-residue stretch at 2–146 (HLSADEKNAL…VANALAHKYH (145 aa)) folds into the Globin domain. Phosphoserine is present on Ser-44. Lys-59 is modified (N6-acetyllysine). His-63 provides a ligand contact to heme b. Lys-82 carries the post-translational modification N6-acetyllysine. Position 92 (His-92) interacts with heme b. Cys-93 bears the S-nitrosocysteine mark. Lys-144 bears the N6-acetyllysine mark.

This sequence belongs to the globin family. Heterotetramer of two alpha chains and two beta chains. In terms of tissue distribution, red blood cells.

Involved in oxygen transport from the lung to the various peripheral tissues. This is Hemoglobin subunit beta from Sciurus carolinensis (Eastern gray squirrel).